A 355-amino-acid polypeptide reads, in one-letter code: uncharacterized protein (355 aa).

The next 3 membrane-spanning stretches (helical) occupy residues 275 to 295 (SLIV…FVAF), 301 to 321 (WNSI…VVGV), and 330 to 350 (IAST…PLAL).

The protein to M.tuberculosis Rv0497.

Its subcellular location is the cell membrane. This is an uncharacterized protein from Mycobacterium leprae (strain TN).